The following is a 634-amino-acid chain: MTNSNLRTENHFDYVKISIASPQRIMDWGQRTLPNGQVVGEVTKPETINYRTLKPEMDGLFCEKIFGPSKDWECHCGKYKRVRHRGIVCERCGVEVTESRVRRHRMGYIKLAAPVSHVWYLKGIPSYVAILLDIPLRDVEQIVYFNCYVVLDPGDHKELKYKQLLTEDEWLEIEDEIYAEDSTIENEPFVGIGAEALKQLLEDLDLNQIAEELREEITQSKGQKRAKLIKRIRVIDNFIATNAKPEWMVLDAIPVIPPDLRPMVQLDGGRFATSDLNDLYRRVINRNNRLARLQEILAPEIIVRNEKRMLQEAVDALIDNGRRGRTVVGANNRALKSLSDIIEGKQGRFRQNLLGKRVDYSGRSVIVVGPKLKMHQCGLPKEMAIELFQPFVIHRLIRQNIVNNIKAAKKLIQKADDEVMQVLQEVIEGHPILLNRAPTLHRLGIQAFEPKLVGGRAIQLHPLVCPAFNADFDGDQMAVHVPLALESQTEARMLMLASNNILSPATGEPIVTPSQDMVLGSYYLTALQPNYQKPDFGDNKSTFASLEDVIFAFEDKRLSLHEWVWVRFNGEVEDEDEMSKPQKIEELEDGSRLEMWKLRRDRFDSQNNLISRFVLTTVGRVVMNYTIIDSVSKT.

4 residues coordinate Zn(2+): Cys-74, Cys-76, Cys-89, and Cys-92. Mg(2+) contacts are provided by Asp-471, Asp-473, and Asp-475.

Belongs to the RNA polymerase beta' chain family. RpoC1 subfamily. In terms of assembly, in cyanobacteria the RNAP catalytic core is composed of 2 alpha, 1 beta, 1 beta', 1 gamma and 1 omega subunit. When a sigma factor is associated with the core the holoenzyme is formed, which can initiate transcription. Requires Mg(2+) as cofactor. Zn(2+) serves as cofactor.

It catalyses the reaction RNA(n) + a ribonucleoside 5'-triphosphate = RNA(n+1) + diphosphate. Its function is as follows. DNA-dependent RNA polymerase catalyzes the transcription of DNA into RNA using the four ribonucleoside triphosphates as substrates. This chain is DNA-directed RNA polymerase subunit gamma, found in Prochlorococcus marinus (strain MIT 9312).